The primary structure comprises 308 residues: MLNSNKFKSKTGAYGDLFQRVVVHSLVLTFLVLLLYSSLFPLTSFALGFITATCGAVGTYEYSSMAKAKMHYPLSTFSAIGSFLFLALSFLSIRWGHSLPGFFDALPWTLLIVWVVWSIFRVRKSTIGALQLSGVTLFSILYVGIPIRLFLHVLYSFIHTQEPYLGIWWASFLIATTKGADIFGYFFGKAFGNKKIAPQISPNKTVVGFVAGCLGATLISFIFFLQIPTRFASYFPMPAILIPLGLALGITGFFGDIIESIFKRDAHLKNSNKLKAVGGMLDTLDSLLLSTPIAYLFLLITQSKEFIG.

8 helical membrane passes run 30 to 50, 73 to 93, 100 to 120, 127 to 147, 167 to 187, 205 to 225, 235 to 255, and 280 to 300; these read FLVL…LGFI, PLST…FLSI, PGFF…WSIF, IGAL…GIPI, IWWA…GYFF, TVVG…IFFL, FPMP…GFFG, and MLDT…FLLI.

Belongs to the CDS family.

The protein resides in the cell membrane. It catalyses the reaction a 1,2-diacyl-sn-glycero-3-phosphate + CTP + H(+) = a CDP-1,2-diacyl-sn-glycerol + diphosphate. It functions in the pathway phospholipid metabolism; CDP-diacylglycerol biosynthesis; CDP-diacylglycerol from sn-glycerol 3-phosphate: step 3/3. This chain is Phosphatidate cytidylyltransferase (cdsA), found in Chlamydia pneumoniae (Chlamydophila pneumoniae).